The chain runs to 777 residues: Intraflagellar transport protein 80 homolog (777 aa).

WD repeat units lie at residues 12-50, 104-143, 145-185, 186-225, 227-265, 267-306, and 504-542; these read KHQELVSCVGWTTAEELYSCSDDHQIVKWNLLTSETSLI, AHCGAVLAGRWNYEGTALVTVGEDGQVKIWSKTGMLRSTL, QQGI…LQWK, AHDGIILKVDWNSVNDLILSAGEDCKYKVWDSYGRVLYGS, PHEHPITSVAWAPDGELFAVGSFHTLRLCDKTGWSYALE, PNTGSIFNIAWSIDGTQIAGACGNGHVVFAHVVEQRWEWK, and KLGTMVHTLAWCDTCNILCGLQDTRFTVWYYPNAVYVDR. Residues 758–777 form a disordered region; it reads TKERDRSSSGQSSKNTGLKP. Over residues 765–777 the composition is skewed to polar residues; sequence SSGQSSKNTGLKP.

As to quaternary structure, component of the IFT complex B, at least composed of IFT20, IFT22, IFT25, IFT27, IFT46, IFT52, TRAF3IP1/IFT54, IFT57, IFT74, IFT80, IFT81, and IFT88. Interacts with IFT88. Interacts with IFT57 and IFT70B.

It is found in the cytoplasm. Its subcellular location is the cytoskeleton. It localises to the cilium basal body. The protein localises to the cilium axoneme. Its function is as follows. Component of the intraflagellar transport (IFT) complex B, which is essential for the development and maintenance of motile and sensory cilia. This is Intraflagellar transport protein 80 homolog (Ift80) from Rattus norvegicus (Rat).